A 118-amino-acid polypeptide reads, in one-letter code: Co-chaperonin GroES (118 aa).

Belongs to the GroES chaperonin family. As to quaternary structure, heptamer of 7 subunits arranged in a ring. Interacts with the chaperonin GroEL.

The protein resides in the cytoplasm. Functionally, together with the chaperonin GroEL, plays an essential role in assisting protein folding. The GroEL-GroES system forms a nano-cage that allows encapsulation of the non-native substrate proteins and provides a physical environment optimized to promote and accelerate protein folding. GroES binds to the apical surface of the GroEL ring, thereby capping the opening of the GroEL channel. This Helicobacter pylori (strain Shi470) protein is Co-chaperonin GroES.